The chain runs to 111 residues: uncharacterized protein (111 aa).

Residues 27–47 traverse the membrane as a helical segment; the sequence is HLFHFPSISFFFFFFFFFFSF.

It is found in the membrane. This is an uncharacterized protein from Saccharomyces cerevisiae (strain ATCC 204508 / S288c) (Baker's yeast).